A 755-amino-acid chain; its full sequence is MTSVFDEHKPSDDSHESKIVINGEEEVLEEENDNPIEEVRLTVPITDDPTLPVLTFRTWTLGLFSCILLAFVNQFFGFRSNQLWVSSVAAQIVTLPLGKLMAKTLPTKKFGFPGTNWSWSFNPGPFNMKEHVLITIFANTGAGGVYATSIITIVKAFYNRQLNVAAAMLLTQTTQLLGYGWAGIFRKFLVDSPYMWWPSNLVQVSLFRALHEKEDLQKGQQTRFRFFIIVFCVSFAYYIIPGYLFPSISAISFVCWIWKSSVTAQIVGSGLKGLGIGSFGLDWSTVAGFLGSPLAVPFFAIANFFGGFFIFLYIVLPIFYWTNAYDAQKFPFYTSHTFDQTGHTYNITRILNEKNFDINLDAYNGYSKLYLSVMFALLYGLSFGSLCATISHVALYDGKFIWGMWKKAKTATKDKYGDVHSRLMKKNYQSVPQWWFIAVLVISFAFALYACEGFDKQLQLPWWGLILACAIALFFTLPIGVIQATTNQQMGLNVITELIIGYLYPGKPLANVAFKTYGYISMSQALYFVGDFKLGHYMKIPPRSMFIVQLVATVVASTVCFGTTWWLITSVENICNVDLLPVGSPWTCPGDEVFYNASIIWGVIGPGRMFTKEGIYPGMNWFFLIGLLAPVPFWYLSKKFPEKKWLKQIHVPLIFSAVSAMPQAKAVHYWSWAIVGVVFNYYIFRRFKTWWARHNYILSAALDAGTAIMGVLIFFAFQNNDISLPDWWGLENSDHCPLAHCPLAKGVVVEGCPVF.

Helical transmembrane passes span 58 to 78 (TWTLGLFSCILLAFVNQFFGF), 82 to 102 (QLWVSSVAAQIVTLPLGKLMA), 134 to 154 (ITIFANTGAGGVYATSIITIV), 165 to 185 (AAAMLLTQTTQLLGYGWAGIF), 226 to 246 (FFIIVFCVSFAYYIIPGYLFP), 298 to 318 (FFAIANFFGGFFIFLYIVLPI), 370 to 390 (YLSVMFALLYGLSFGSLCATI), 434 to 454 (WWFIAVLVISFAFALYACEGF), 462 to 482 (WWGLILACAIALFFTLPIGVI), 546 to 566 (FIVQLVATVVASTVCFGTTWW), 614 to 634 (GIYPGMNWFFLIGLLAPVPFW), 664 to 684 (AKAVHYWSWAIVGVVFNYYIF), and 697 to 717 (ILSAALDAGTAIMGVLIFFAF).

This sequence belongs to the oligopeptide OPT transporter (TC 2.A.67.1) family. In terms of tissue distribution, highly expressed in flowers, and moderately expressed in leaves and stems.

Its subcellular location is the membrane. Its function is as follows. Involved in the translocation of tetra- and pentapeptides across the cellular membrane in an energy-dependent manner. This is Oligopeptide transporter 1 (OPT1) from Arabidopsis thaliana (Mouse-ear cress).